We begin with the raw amino-acid sequence, 192 residues long: CASP-like protein 1E1 (192 aa).

A disordered region spans residues 1 to 22 (MDSQNKNSVDAMDGIESRGMKE). Residues 1–29 (MDSQNKNSVDAMDGIESRGMKERGGRTNS) are Cytoplasmic-facing. A helical membrane pass occupies residues 30 to 50 (FLVLRVLAFVLTSTAAIVHGV). Over 51–81 (NNQTETVPIQLTSSMPPLYVPVVAKWHYLSA) the chain is Extracellular. The N-linked (GlcNAc...) asparagine glycan is linked to Asn-52. Residues 82–102 (FVFFVVSNAIACSYAAISVML) traverse the membrane as a helical segment. Topologically, residues 103–118 (SFCGKKSMVPIILTLD) are cytoplasmic. A helical membrane pass occupies residues 119–139 (LLMVALLFSSNGAATAIGVMG). Topologically, residues 140-161 (YKGNSHVKWNKVCNVFGKFCNQ) are extracellular. A helical membrane pass occupies residues 162 to 182 (VAASVVLSLIGSIVFVLLVML). The Cytoplasmic portion of the chain corresponds to 183–192 (TAFRLHNKSK).

This sequence belongs to the Casparian strip membrane proteins (CASP) family. In terms of assembly, homodimer and heterodimers.

The protein resides in the cell membrane. In Ricinus communis (Castor bean), this protein is CASP-like protein 1E1.